A 310-amino-acid chain; its full sequence is Probable deoxyhypusine synthase (310 aa).

Lys280 acts as the Nucleophile in catalysis.

This sequence belongs to the deoxyhypusine synthase family. Requires NAD(+) as cofactor.

The enzyme catalyses [eIF5A protein]-L-lysine + spermidine = [eIF5A protein]-deoxyhypusine + propane-1,3-diamine. It functions in the pathway protein modification; eIF5A hypusination. Functionally, catalyzes the NAD-dependent oxidative cleavage of spermidine and the subsequent transfer of the butylamine moiety of spermidine to the epsilon-amino group of a specific lysine residue of the eIF-5A precursor protein to form the intermediate deoxyhypusine residue. This chain is Probable deoxyhypusine synthase (dys), found in Aeropyrum pernix (strain ATCC 700893 / DSM 11879 / JCM 9820 / NBRC 100138 / K1).